A 240-amino-acid chain; its full sequence is MKPAYFISDLHLSEKHPELTALLLRFLRSSAAGQARAVYILGDLFDFWVGDDEVSELNTSVAREIRKLSDKGVAVFFVRGNRDFLIGQDFCRQAGMTLLPDYSVLDLFGCKTLICHGDTLCTDDRAYQRFRKIVHRKRLQKLFLMLPLKWRTRLAAKIRRVSKMEKQVKPADIMDVNAAFTARQVRAFNAERLIHGHTHREHIHHENGFTRIVLGDWHNDYASILRVDGDGAVFVPLEKY.

The Mn(2+) site is built by Asp-9, His-11, Asp-43, Asn-81, and His-116. Asn-81–Arg-82 is a substrate binding site. Positions 124, 162, 166, 169, and 197 each coordinate substrate. Positions 197 and 199 each coordinate Mn(2+).

The protein belongs to the LpxH family. Mn(2+) serves as cofactor.

Its subcellular location is the cell inner membrane. It carries out the reaction UDP-2-N,3-O-bis[(3R)-3-hydroxytetradecanoyl]-alpha-D-glucosamine + H2O = 2-N,3-O-bis[(3R)-3-hydroxytetradecanoyl]-alpha-D-glucosaminyl 1-phosphate + UMP + 2 H(+). Its pathway is glycolipid biosynthesis; lipid IV(A) biosynthesis; lipid IV(A) from (3R)-3-hydroxytetradecanoyl-[acyl-carrier-protein] and UDP-N-acetyl-alpha-D-glucosamine: step 4/6. In terms of biological role, hydrolyzes the pyrophosphate bond of UDP-2,3-diacylglucosamine to yield 2,3-diacylglucosamine 1-phosphate (lipid X) and UMP by catalyzing the attack of water at the alpha-P atom. Involved in the biosynthesis of lipid A, a phosphorylated glycolipid that anchors the lipopolysaccharide to the outer membrane of the cell. The protein is UDP-2,3-diacylglucosamine hydrolase of Neisseria meningitidis serogroup C (strain 053442).